Consider the following 478-residue polypeptide: Cysteine--tRNA ligase (478 aa).

C27 is a Zn(2+) binding site. Positions 29 to 39 match the 'HIGH' region motif; that stretch reads PTTYNFIHLGN. C207, H232, and E236 together coordinate Zn(2+). The 'KMSKS' region motif lies at 264–268; that stretch reads KMSKS. K267 is an ATP binding site.

The protein belongs to the class-I aminoacyl-tRNA synthetase family. As to quaternary structure, monomer. The cofactor is Zn(2+).

The protein localises to the cytoplasm. The catalysed reaction is tRNA(Cys) + L-cysteine + ATP = L-cysteinyl-tRNA(Cys) + AMP + diphosphate. The protein is Cysteine--tRNA ligase of Desulforudis audaxviator (strain MP104C).